Reading from the N-terminus, the 498-residue chain is ATP synthase subunit alpha 1 (498 aa).

164–171 (GNRQSGKT) contributes to the ATP binding site.

It belongs to the ATPase alpha/beta chains family. As to quaternary structure, F-type ATPases have 2 components, CF(1) - the catalytic core - and CF(0) - the membrane proton channel. CF(1) has five subunits: alpha(3), beta(3), gamma(1), delta(1), epsilon(1). CF(0) has three main subunits: a(1), b(2) and c(9-12). The alpha and beta chains form an alternating ring which encloses part of the gamma chain. CF(1) is attached to CF(0) by a central stalk formed by the gamma and epsilon chains, while a peripheral stalk is formed by the delta and b chains.

It is found in the cell membrane. It catalyses the reaction ATP + H2O + 4 H(+)(in) = ADP + phosphate + 5 H(+)(out). Functionally, produces ATP from ADP in the presence of a proton gradient across the membrane. The alpha chain is a regulatory subunit. The protein is ATP synthase subunit alpha 1 of Listeria welshimeri serovar 6b (strain ATCC 35897 / DSM 20650 / CCUG 15529 / CIP 8149 / NCTC 11857 / SLCC 5334 / V8).